A 1624-amino-acid chain; its full sequence is Putative serine/threonine-protein kinase/receptor R831 (1624 aa).

A signal peptide spans 1 to 25 (MHSVYTKYTIILILLVIYQGLPTNT). N-linked (GlcNAc...) asparagine; by host glycans are attached at residues Asn152, Asn169, Asn200, Asn205, Asn225, Asn240, Asn245, Asn292, Asn364, Asn479, Asn541, Asn720, and Asn737. A helical transmembrane segment spans residues 747 to 767 (VIPIACIFGLLLLTLLIVIIF). The region spanning 786 to 1049 (LEIGETLGTG…EIMTRLSNIL (264 aa)) is the Protein kinase 1 domain. ATP contacts are provided by residues 792–800 (LGTGGYGEV) and Lys813. Catalysis depends on Asp908, which acts as the Proton acceptor. Residues 1054 to 1093 (NMTSGTSSSSLSSGGIGKSITDSKSSNSRSSVESSNTSNT) are compositionally biased toward low complexity. Residues 1054–1101 (NMTSGTSSSSLSSGGIGKSITDSKSSNSRSSVESSNTSNTFRGIDRHN) form a disordered region. Positions 1109-1252 (TVAFIDIISA…STVNITGKIT (144 aa)) constitute a Guanylate cyclase domain. The Protein kinase 2 domain occupies 1364–1615 (ISIGKQIGLG…MTEVVQQLML (252 aa)). Residues 1370 to 1378 (IGLGSYGIV) and Lys1391 each bind ATP. The active-site Proton acceptor is Asp1487.

The protein resides in the membrane. The catalysed reaction is L-seryl-[protein] + ATP = O-phospho-L-seryl-[protein] + ADP + H(+). It carries out the reaction L-threonyl-[protein] + ATP = O-phospho-L-threonyl-[protein] + ADP + H(+). The protein is Putative serine/threonine-protein kinase/receptor R831 of Acanthamoeba polyphaga (Amoeba).